We begin with the raw amino-acid sequence, 352 residues long: Ion-translocating oxidoreductase complex subunit D (352 aa).

4 helical membrane-spanning segments follow: residues 20 to 40, 42 to 62, 89 to 109, and 123 to 143; these read IMLL…WFFG, GTLV…ALVL, IPPL…VIIA, and PAMI…TSWL. Thr-187 carries the FMN phosphoryl threonine modification. 5 consecutive transmembrane segments (helical) span residues 214–234, 242–262, 267–287, 301–321, and 322–342; these read ILAG…GVWL, WHVP…GWLF, LAAP…FFIL, LIFG…GGYP, and DGVA…DYYT.

The protein belongs to the NqrB/RnfD family. As to quaternary structure, the complex is composed of six subunits: RsxA, RsxB, RsxC, RsxD, RsxE and RsxG. Requires FMN as cofactor.

The protein resides in the cell inner membrane. Part of a membrane-bound complex that couples electron transfer with translocation of ions across the membrane. Required to maintain the reduced state of SoxR. The polypeptide is Ion-translocating oxidoreductase complex subunit D (Escherichia coli (strain UTI89 / UPEC)).